The chain runs to 75 residues: uncharacterized protein (75 aa).

Positions 1 to 19 (MQCVCLCVFVLLLAGCVTS) are cleaved as a signal peptide.

Nacreous layer of shell (at protein level).

Its subcellular location is the secreted. This is an uncharacterized protein from Margaritifera margaritifera (Freshwater pearl mussel).